Consider the following 703-residue polypeptide: Zinc finger protein 750 (703 aa).

The segment at 25–51 adopts a CCHC-type zinc-finger fold; it reads YKCFQCPFTCNEKSHLFNHMKYGLCKN. Zn(2+) contacts are provided by Cys27, Cys30, His43, and Cys49. 4 disordered regions span residues 64–113, 350–527, 553–614, and 630–703; these read KCPK…DAKE, PASS…YGPM, WAPR…KQTA, and RVAD…TRVS. Residues 67-106 are compositionally biased toward polar residues; the sequence is KSSSLDPKQTHQPEPTSKPATSKSLLNGLSSFDPKSQQGS. The span at 352-361 shows a compositional bias: low complexity; sequence SSPSELNLSS. Positions 367 to 394 are enriched in basic and acidic residues; the sequence is TECEKGSPVPEAKDPSKDGQRDAEEAKM. 2 stretches are compositionally biased toward polar residues: residues 410–421 and 456–477; these read SPTNFTQTSQTF and GSESPHSQPPANRTESPKSLQA. Positions 574 to 611 are enriched in basic and acidic residues; it reads TETKGSEDRTSRVETPQDKAHSRTTPDVHTEDSSDEQK. Polar residues predominate over residues 639–655; that stretch reads QEPTRQDVPTLSATENL.

The protein localises to the nucleus. Functionally, transcription factor involved in epidermis differentiation. Required for terminal epidermal differentiation: acts downstream of p63/TP63 and activates expression of late epidermal differentiation genes. Specifically binds to the promoter of KLF4 and promotes its expression. This Mus musculus (Mouse) protein is Zinc finger protein 750 (Znf750).